Reading from the N-terminus, the 308-residue chain is Porphobilinogen deaminase (308 aa).

Cys241 is modified (S-(dipyrrolylmethanemethyl)cysteine).

It belongs to the HMBS family. In terms of assembly, monomer. Requires dipyrromethane as cofactor.

The catalysed reaction is 4 porphobilinogen + H2O = hydroxymethylbilane + 4 NH4(+). It functions in the pathway porphyrin-containing compound metabolism; protoporphyrin-IX biosynthesis; coproporphyrinogen-III from 5-aminolevulinate: step 2/4. Its function is as follows. Tetrapolymerization of the monopyrrole PBG into the hydroxymethylbilane pre-uroporphyrinogen in several discrete steps. This Staphylococcus aureus (strain MSSA476) protein is Porphobilinogen deaminase.